Here is a 479-residue protein sequence, read N- to C-terminus: Rifampicin monooxygenase (479 aa).

The FAD site is built by T12, D31, K32, R41, Q98, V122, T156, D278, L291, and N292.

Belongs to the rifampicin monooxygenase family. Requires FAD as cofactor.

It catalyses the reaction rifampicin + NADPH + O2 = rifampicin para-naphthoquinone carboxamide + NADP(+) + H2O + H(+). The enzyme catalyses rifampicin + NADH + O2 = rifampicin para-naphthoquinone carboxamide + NAD(+) + H2O + H(+). Monooxygenase that can modify rifampicin, thereby inactivating its antibiotic activity. In Rhodococcus hoagii (Corynebacterium equii), this protein is Rifampicin monooxygenase.